The primary structure comprises 490 residues: Beta-glucosidase 42 (490 aa).

A beta-D-glucoside contacts are provided by residues glutamine 35, histidine 137, 182–183, tyrosine 317, and glutamate 388; that span reads NE. Glutamate 183 serves as the catalytic Proton donor. Residue glutamate 388 is the Nucleophile of the active site. Residue asparagine 420 is glycosylated (N-linked (GlcNAc...) asparagine). Residues tryptophan 437, 444-445, and phenylalanine 453 each bind a beta-D-glucoside; that span reads EW.

Belongs to the glycosyl hydrolase 1 family. In terms of tissue distribution, expressed at low levels predominantly in root epidermal cells.

It carries out the reaction Hydrolysis of terminal, non-reducing beta-D-glucosyl residues with release of beta-D-glucose.. Its function is as follows. Glucosidase that hydrolyzes scopolin and various beta-glucosides, cellooligosaccharides (mainly cellotriose) and laminarioligosaccharides. Can use p-nitrophenyl-beta-glucosides (pNP beta-Glc) and p-nitrophenyl-beta-D-fucosides (pNP beta-D-Fuc) as substrates, and, to a lower extent, beta-galactosides, beta-mannosides and beta-xylosides. Involved in the secretion of root-derived phenolics upon iron ions (Fe) depletion. Promotes disease resistance toward B.cinerea, H.arabidopsidis and P.syringae pv. tomato DC3000. Required during rhizobacteria-mediated (e.g. P.fluorescens WCS417r) broad-spectrum induced systemic resistance (ISR) against several pathogens. This Arabidopsis thaliana (Mouse-ear cress) protein is Beta-glucosidase 42.